Consider the following 323-residue polypeptide: tRNA U34 carboxymethyltransferase (323 aa).

Carboxy-S-adenosyl-L-methionine-binding positions include lysine 91, tryptophan 105, lysine 110, glycine 130, 180 to 181 (IE), methionine 196, tyrosine 200, and arginine 315.

This sequence belongs to the class I-like SAM-binding methyltransferase superfamily. CmoB family. As to quaternary structure, homotetramer.

It catalyses the reaction carboxy-S-adenosyl-L-methionine + 5-hydroxyuridine(34) in tRNA = 5-carboxymethoxyuridine(34) in tRNA + S-adenosyl-L-homocysteine + H(+). Catalyzes carboxymethyl transfer from carboxy-S-adenosyl-L-methionine (Cx-SAM) to 5-hydroxyuridine (ho5U) to form 5-carboxymethoxyuridine (cmo5U) at position 34 in tRNAs. This is tRNA U34 carboxymethyltransferase from Geobacter sp. (strain M21).